Reading from the N-terminus, the 620-residue chain is 1-deoxy-D-xylulose-5-phosphate synthase (620 aa).

Thiamine diphosphate is bound by residues His80 and 121–123; that span reads GHS. Asp152 is a binding site for Mg(2+). Residues 153-154, Asn181, Tyr288, and Glu370 contribute to the thiamine diphosphate site; that span reads GA. Mg(2+) is bound at residue Asn181.

This sequence belongs to the transketolase family. DXPS subfamily. As to quaternary structure, homodimer. Mg(2+) is required as a cofactor. Requires thiamine diphosphate as cofactor.

It carries out the reaction D-glyceraldehyde 3-phosphate + pyruvate + H(+) = 1-deoxy-D-xylulose 5-phosphate + CO2. It participates in metabolic intermediate biosynthesis; 1-deoxy-D-xylulose 5-phosphate biosynthesis; 1-deoxy-D-xylulose 5-phosphate from D-glyceraldehyde 3-phosphate and pyruvate: step 1/1. In terms of biological role, catalyzes the acyloin condensation reaction between C atoms 2 and 3 of pyruvate and glyceraldehyde 3-phosphate to yield 1-deoxy-D-xylulose-5-phosphate (DXP). This is 1-deoxy-D-xylulose-5-phosphate synthase from Salmonella agona (strain SL483).